Reading from the N-terminus, the 101-residue chain is Urease subunit beta (101 aa).

Belongs to the urease beta subunit family. In terms of assembly, heterotrimer of UreA (gamma), UreB (beta) and UreC (alpha) subunits. Three heterotrimers associate to form the active enzyme.

It is found in the cytoplasm. The enzyme catalyses urea + 2 H2O + H(+) = hydrogencarbonate + 2 NH4(+). It participates in nitrogen metabolism; urea degradation; CO(2) and NH(3) from urea (urease route): step 1/1. This is Urease subunit beta from Haemophilus influenzae (strain 86-028NP).